A 393-amino-acid chain; its full sequence is Serine/threonine protein kinase AFUB_078980 (393 aa).

A Protein kinase domain is found at 61–390 (YQVLSKLGFG…APELLTDPWL (330 aa)). Residues 67–75 (LGFGANSTV) and Lys-90 contribute to the ATP site. The active-site Proton acceptor is Asp-190.

It belongs to the protein kinase superfamily. CMGC Ser/Thr protein kinase family.

The catalysed reaction is L-seryl-[protein] + ATP = O-phospho-L-seryl-[protein] + ADP + H(+). The enzyme catalyses L-threonyl-[protein] + ATP = O-phospho-L-threonyl-[protein] + ADP + H(+). In terms of biological role, serine/threonine protein kinase; part of the subtelomeric hrmA-associated cluster (HAC) containing genes that alter the hyphal surface (such as reduced total chitin or increased beta-glucan exposure) and perturb inter-hyphal interactions within the developing biofilms, resulting in a loss of vertically aligned polarized growing filaments. Consequently, this hypoxia-typic morphotype (called H-MORPH) with altered biofilm architecture leads to increased hypoxia fitness, increased host inflammation, rapid disease progression, and mortality in a murine model of invasive aspergillosis. The sequence is that of Serine/threonine protein kinase AFUB_078980 from Aspergillus fumigatus (strain CBS 144.89 / FGSC A1163 / CEA10) (Neosartorya fumigata).